A 91-amino-acid chain; its full sequence is Transcription factor ILI3 (91 aa).

Residues 3–58 (SRRGGGGGGGRITDEEINELISKLQALLPESSRSRGASRSSASKLLKETCSYIKSL) form the bHLH domain.

This sequence belongs to the bHLH protein family.

Atypical and probable non DNA-binding bHLH transcription that integrates multiple signaling pathways to regulate cell elongation and plant development. In Oryza sativa subsp. indica (Rice), this protein is Transcription factor ILI3 (ILI3).